The sequence spans 100 residues: Small ribosomal subunit protein uS14c (100 aa).

Belongs to the universal ribosomal protein uS14 family. Part of the 30S ribosomal subunit.

It localises to the plastid. Its subcellular location is the chloroplast. In terms of biological role, binds 16S rRNA, required for the assembly of 30S particles. The chain is Small ribosomal subunit protein uS14c from Cucumis sativus (Cucumber).